A 253-amino-acid polypeptide reads, in one-letter code: MNRLLIIDGLNLVRRIHAALPDEGDMDTLYDRVAQACRKLLRGHQPTHCAIVWDGDAISWRKHLYEDYKKGRKPMPEALAKGLPALKTKLETLDVHSVNADSEADDIIATLACKLAATGGEAIIVSTDKGLLQLMSPHIRQWDHFAGQFFDIEAFEAKLGIERHQLLDYIALCGDSGNKIPGIPGIGPKSASELLRTYRSLANLYHSLGTLGSRQANKLREGRDMARLSYKLAKLQTELPLHLKLSDLRVNPS.

Asp-105 lines the Mg(2+) pocket. Residues 162–251 (ERHQLLDYIA…HLKLSDLRVN (90 aa)) form the 5'-3' exonuclease domain. The K(+) site is built by Leu-172, Pro-181, Ile-183, and Ile-186. The interval 185–190 (GIGPKS) is interaction with DNA.

Belongs to the Xni family. The cofactor is Mg(2+). K(+) serves as cofactor.

Has flap endonuclease activity. During DNA replication, flap endonucleases cleave the 5'-overhanging flap structure that is generated by displacement synthesis when DNA polymerase encounters the 5'-end of a downstream Okazaki fragment. The polypeptide is Flap endonuclease Xni (Shewanella amazonensis (strain ATCC BAA-1098 / SB2B)).